The chain runs to 271 residues: Phosphonoacetaldehyde hydrolase (271 aa).

The active-site Nucleophile is aspartate 12. 2 residues coordinate Mg(2+): aspartate 12 and alanine 14. Lysine 54 serves as the catalytic Schiff-base intermediate with substrate. Aspartate 188 serves as a coordination point for Mg(2+).

It belongs to the HAD-like hydrolase superfamily. PhnX family. In terms of assembly, homodimer. Mg(2+) is required as a cofactor.

It carries out the reaction phosphonoacetaldehyde + H2O = acetaldehyde + phosphate + H(+). Its function is as follows. Involved in phosphonate degradation. The chain is Phosphonoacetaldehyde hydrolase from Vibrio cholerae serotype O1 (strain ATCC 39541 / Classical Ogawa 395 / O395).